We begin with the raw amino-acid sequence, 416 residues long: UDP-N-acetylmuramoylalanine--D-glutamate ligase (416 aa).

Gly-108–Thr-114 serves as a coordination point for ATP.

The protein belongs to the MurCDEF family.

The protein localises to the cytoplasm. It catalyses the reaction UDP-N-acetyl-alpha-D-muramoyl-L-alanine + D-glutamate + ATP = UDP-N-acetyl-alpha-D-muramoyl-L-alanyl-D-glutamate + ADP + phosphate + H(+). It functions in the pathway cell wall biogenesis; peptidoglycan biosynthesis. Cell wall formation. Catalyzes the addition of glutamate to the nucleotide precursor UDP-N-acetylmuramoyl-L-alanine (UMA). This is UDP-N-acetylmuramoylalanine--D-glutamate ligase from Chlamydia trachomatis serovar L2 (strain ATCC VR-902B / DSM 19102 / 434/Bu).